Here is a 574-residue protein sequence, read N- to C-terminus: ATP-grasp enzyme fsqD (574 aa).

Positions asparagine 234 to valine 462 constitute an ATP-grasp domain. Alanine 263–aspartate 318 is a binding site for ATP. Mg(2+) is bound by residues glutamate 394, glutamate 431, and asparagine 433. Residues glutamate 394, glutamate 431, and asparagine 433 each coordinate Mn(2+).

It depends on Mg(2+) as a cofactor. Requires Mn(2+) as cofactor.

Its pathway is secondary metabolite biosynthesis. In terms of biological role, ATP-grasp enzyme; part of the gene cluster that mediates the biosynthesis of the isoquinoline alkaloids fumisoquin A, fumisoquin B and fumisoquin C; as well as small amounts of fumipyrrole as a shunt metabolite. The products of the cluster lead to a brown coloration and are important for growth and conidiation. The nonribosomal peptide synthetase-like protein fsqF, which lacks a canonical condensation domain, is required for addition of a serine-derived dehydroalanine moiety to activated tyrosine but is not essential for the subsequent steps leading to isoquinoline formation. A different enzyme, most likely the ATP-grasp enzyme fsqD, is responsible for activation of tyrosine. Three additional enzymes encoded by the fsq cluster, the N-methyltransferase fsqC, the phenol 2-monooxygenase fsqG and the FAD-dependent oxidase fsqB, catalyze the formation of the isoquinoline ring system in the fumisoquins. FsqB converts the fspF thiolation domain-bound (2S,4S,5S)-2-amino-6-(3,4-dihydroxyphenyl)-4-hydroxy-5-(methylamino)hexanoyl into isoquinoline. The cyclization most likely proceeds via a two-step mechanism, beginning with FAD-dependent oxidation of the methyl group to an iminium species followed by electrophilic attack on the deprotonated phenol. In Aspergillus fumigatus (strain ATCC MYA-4609 / CBS 101355 / FGSC A1100 / Af293) (Neosartorya fumigata), this protein is ATP-grasp enzyme fsqD.